A 358-amino-acid polypeptide reads, in one-letter code: MSEKVKFEKRESLKEKPDTANLGFGQYFTDYMLSVDYDADQGWHDMKIVPYAPFEISPAAQGLHYGQAVFEGLKAYKHNGEVVLFRPDQNFKRINNSLARLEMPEVDEEALLEGLKQLIDVERDWVPEGEGQSLYIRPFVFATEGVLGVRSSHQYKLLIILSPSGAYYGGDTLKSTKIYVEDEYVRAVRGGVGFAKVAGNYAASLLAQTNANKLGYDQVLWLDGVEQKYVEEVGSMNIFFVENGKVVTPALNGSILPGITRKSIIQLAEDLGYEVEERRVSIEELFNAYDKGELTEVFGSGTAAVISPVGTLRYEDREIVINNNEPGKITQKLYDTYTGIQSGKLEDKYGWRVEVPKY.

Lys196 bears the N6-(pyridoxal phosphate)lysine mark.

The protein belongs to the class-IV pyridoxal-phosphate-dependent aminotransferase family. Pyridoxal 5'-phosphate serves as cofactor.

The enzyme catalyses L-leucine + 2-oxoglutarate = 4-methyl-2-oxopentanoate + L-glutamate. It carries out the reaction L-isoleucine + 2-oxoglutarate = (S)-3-methyl-2-oxopentanoate + L-glutamate. It catalyses the reaction L-valine + 2-oxoglutarate = 3-methyl-2-oxobutanoate + L-glutamate. The protein operates within amino-acid biosynthesis; L-isoleucine biosynthesis; L-isoleucine from 2-oxobutanoate: step 4/4. Its pathway is amino-acid biosynthesis; L-leucine biosynthesis; L-leucine from 3-methyl-2-oxobutanoate: step 4/4. It functions in the pathway amino-acid biosynthesis; L-valine biosynthesis; L-valine from pyruvate: step 4/4. Functionally, acts on leucine, isoleucine and valine. In Staphylococcus epidermidis (strain ATCC 12228 / FDA PCI 1200), this protein is Probable branched-chain-amino-acid aminotransferase (ilvE).